A 1977-amino-acid chain; its full sequence is Echinoderm microtubule-associated protein-like 5 (1977 aa).

WD repeat units lie at residues 59 to 100 (GHSD…TVSV), 104 to 145 (VHTH…MLSM), 148 to 187 (GHTDRIFDISWDLYQPNKLVSCGVKHIKFWSLCGNALTPK), 195 to 233 (GDLQTILCLACARDELTYSGALNGDIYVWKGINLIRTIQ), 235 to 273 (AHTAGIFSMNSCEEGFATGGRDGCIRLWDLTFKPITVID), 280 to 321 (GYKG…LIMQ), 323 to 362 (HCEGELWALAVHPTKPLAVTGSDDRSVRIWSLVDHALIAR), 406 to 445 (DRKEAIHELKYSPDGAYLAVGCNDSSVDIYGVAQRYKKVG), 449 to 488 (GSLSFITHLDWSSDSRYLQTNDGSGKRLLYKMPGGKEVTS), and 561 to 601 (GHSA…KLKD). The tract at residues 609 to 629 (ESLAESNSDESDSDLSDVPEL) is disordered. Acidic residues predominate over residues 615 to 629 (NSDESDSDLSDVPEL). WD repeat units lie at residues 725–766 (GHDD…PLSI), 770–811 (YHQY…KLSV), 814–853 (GSKDKIFVVKMNPYVPDKLITAGIKHMKFWRRAGGGLIGK), 861–900 (GKNDTMMCAVYGWTEEMAFSGTSTGDVCIWRDVFLVKTVK), 901–940 (AHDGPVFSMHALEKGFVTGGKDGMVALWDDSFERCLKTYA), 996–1035 (HMEGEVWGLATHPYLPICATVSDDKTLRIWDLSPSHCMLA), 1038–1077 (KLKKGGRCCCFSPDGKALAVGLNDGSFLMANADTLEDLVS), 1080–1120 (HRKD…RVGV), and 1236–1276 (AHST…HREK). Disordered regions lie at residues 1276 to 1297 (KKYCDSEESDIDSEEDGGYDSD) and 1323 to 1363 (PHLQ…NVGK). Over residues 1281–1294 (SEESDIDSEEDGGY) the composition is skewed to acidic residues. A compositionally biased stretch (basic and acidic residues) spans 1326–1337 (QQKEPSVDERQG). WD repeat units follow at residues 1420-1471 (EHND…TLSI), 1475-1516 (SHSK…KIAS), 1519-1558 (GHNQRIFVAEFRPDSDTQFVSVGIKHVKFWTLAGRALLSK), 1568-1606 (ARMQTMLAVAFGANNLTFTGTISGDVCVWKDHILCRVVA), 1608-1654 (AHNG…RAFR), 1699-1739 (GHVD…MLNK), 1741-1782 (NLGH…GKKR), 1783-1822 (DRRCAIHDIRFSPDSRYLAVGSSENSVDFYDLTLGPTLNR), 1895-1934 (AEKADVTCACVSHSGISLVTGDDFGMVKLYDFPCPEKFAK), and 1940-1977 (GHSPHVTNIRFTSGDRHVVSAGGDDCSLFVWKCVHMPH).

Belongs to the WD repeat EMAP family.

The protein localises to the cytoplasm. It is found in the cytoskeleton. In terms of biological role, may modify the assembly dynamics of microtubules, such that microtubules are slightly longer, but more dynamic. The protein is Echinoderm microtubule-associated protein-like 5 (Eml5) of Mus musculus (Mouse).